The following is a 575-amino-acid chain: Urease subunit alpha (575 aa).

Residues 137 to 575 enclose the Urease domain; that stretch reads GGIDSHIHWI…LPMAQRYFLF (439 aa). Residues His-142, His-144, and Lys-225 each contribute to the Ni(2+) site. Residue Lys-225 is modified to N6-carboxylysine. His-227 is a binding site for substrate. Ni(2+) is bound by residues His-254 and His-280. The active-site Proton donor is the His-328. Asp-368 serves as a coordination point for Ni(2+).

It belongs to the metallo-dependent hydrolases superfamily. Urease alpha subunit family. Heterotrimer of UreA (gamma), UreB (beta) and UreC (alpha) subunits. Three heterotrimers associate to form the active enzyme. Requires Ni cation as cofactor. Carboxylation allows a single lysine to coordinate two nickel ions.

The protein localises to the cytoplasm. It carries out the reaction urea + 2 H2O + H(+) = hydrogencarbonate + 2 NH4(+). Its pathway is nitrogen metabolism; urea degradation; CO(2) and NH(3) from urea (urease route): step 1/1. The chain is Urease subunit alpha from Leptothrix cholodnii (strain ATCC 51168 / LMG 8142 / SP-6) (Leptothrix discophora (strain SP-6)).